The chain runs to 257 residues: Ribosome-associated protein quality control protein P2 (257 aa).

Positions 1–74 (MSDIYQHFRK…RAERKRAILF (74 aa)) are N-terminal domain. The interval 87 to 166 (LQAFNVRYAD…EKIDLSDLNI (80 aa)) is central region. The 71-residue stretch at 181–251 (LRLDAVCASM…GKTKKDKWRV (71 aa)) folds into the S4 RNA-binding domain.

In the presence of chloramphenicol (a translation elongation inhibitor), but not erythromycin or lincomycin, associates with 50S ribosomal subunits with or without a tRNA in the P-site. The S4 domain binds in a similar position to RqcP.

Its subcellular location is the cytoplasm. Part of the ribosome quality control system (RQC), a ribosome-associated complex that mediates the extraction of incompletely synthesized nascent chains from stalled ribosomes and their subsequent degradation. RqcH recruits Ala-charged tRNA, and with RqcP directs the elongation of stalled nascent chains on 50S ribosomal subunits, leading to non-templated C-terminal alanine extensions (Ala tail). The Ala tail promotes nascent chain degradation. RqcP2 (YlmH) overexpression can compensate for RqcP's role in Ala tailing during RQC, restoring Ala tail addition to peptides in stalled ribosomes. Overexpression complements a double ssrA-rqcP double deletion, but not an ssrA-rqcH double deletion. Its function is as follows. The majority of tagged protein is associated with tRNA-less 50S subunits, suggesting it might also play a role in late stage 50S subunit biogenesis. In Bacillus subtilis (strain 168), this protein is Ribosome-associated protein quality control protein P2.